Consider the following 439-residue polypeptide: 26S proteasome regulatory subunit 4 (439 aa).

2 disordered regions span residues 1 to 48 (MGQN…AMKL) and 82 to 104 (ERLK…LRGT). Basic and acidic residues-rich tracts occupy residues 12–25 (GEKK…KKYE) and 82–102 (ERLK…DDLR). 225–232 (GPPGTGKT) provides a ligand contact to ATP.

Belongs to the AAA ATPase family. As to quaternary structure, interacts with PSMD5.

It is found in the cytoplasm. The protein resides in the nucleus. Functionally, the 26S proteasome is involved in the ATP-dependent degradation of ubiquitinated proteins. The regulatory (or ATPase) complex confers ATP dependency and substrate specificity to the 26S complex. This chain is 26S proteasome regulatory subunit 4 (Rpt2), found in Drosophila melanogaster (Fruit fly).